The sequence spans 206 residues: RNA pyrophosphohydrolase (206 aa).

In terms of domain architecture, Nudix hydrolase spans 6–149 (GYRPNVGIVL…KRGVYARALR (144 aa)). The Nudix box signature appears at 38–59 (GGMNTDETPVEAMYRELQEETG). The tract at residues 175–206 (MPGHTAGHDRPRKRPRSRGYWPKKAQGDVPPT) is disordered.

Belongs to the Nudix hydrolase family. RppH subfamily. The cofactor is a divalent metal cation.

Functionally, accelerates the degradation of transcripts by removing pyrophosphate from the 5'-end of triphosphorylated RNA, leading to a more labile monophosphorylated state that can stimulate subsequent ribonuclease cleavage. This chain is RNA pyrophosphohydrolase, found in Stenotrophomonas maltophilia (strain R551-3).